Reading from the N-terminus, the 292-residue chain is Ribosomal RNA small subunit methyltransferase A (292 aa).

S-adenosyl-L-methionine is bound by residues asparagine 29, leucine 31, glycine 56, glutamate 77, aspartate 102, and asparagine 127.

The protein belongs to the class I-like SAM-binding methyltransferase superfamily. rRNA adenine N(6)-methyltransferase family. RsmA subfamily.

It is found in the cytoplasm. The enzyme catalyses adenosine(1518)/adenosine(1519) in 16S rRNA + 4 S-adenosyl-L-methionine = N(6)-dimethyladenosine(1518)/N(6)-dimethyladenosine(1519) in 16S rRNA + 4 S-adenosyl-L-homocysteine + 4 H(+). Its function is as follows. Specifically dimethylates two adjacent adenosines (A1518 and A1519) in the loop of a conserved hairpin near the 3'-end of 16S rRNA in the 30S particle. May play a critical role in biogenesis of 30S subunits. The sequence is that of Ribosomal RNA small subunit methyltransferase A from Bacillus pumilus (strain SAFR-032).